We begin with the raw amino-acid sequence, 524 residues long: Cytokinin dehydrogenase 7 (524 aa).

Residues 58 to 238 (NCVKPLAVVR…TRARVLLQPA (181 aa)) form the FAD-binding PCMH-type domain. Ala-91, Gly-93, Asn-94, and Gly-95 together coordinate FAD. Pros-8alpha-FAD histidine is present on His-96. Residues Ser-97, Gln-101, Asp-162, Thr-167, Ser-173, Val-177, Ile-228, Tyr-479, Ser-514, and Gln-517 each coordinate FAD.

This sequence belongs to the oxygen-dependent FAD-linked oxidoreductase family. FAD serves as cofactor. In terms of tissue distribution, expressed in the vasculature of roots, hypocotyls, cotyledons and leaves of young seedlings. In flowers, expressed in the transmitting tissue of the gynoecium prior to pollination. Expressed in the mature embryo sac with maximum activity in the egg cell and the synergids.

Its subcellular location is the cytoplasm. It is found in the cytosol. The enzyme catalyses N(6)-dimethylallyladenine + A + H2O = 3-methyl-2-butenal + adenine + AH2. Its function is as follows. Catalyzes the oxidation of cytokinins, a family of N(6)-substituted adenine derivatives that are plant hormones, where the substituent is an isopentenyl group. Catalyzes in vitro the oxidation of various types of cytokinin nucleotides that are known as direct products of cytokinin biosynthesis. The sequence is that of Cytokinin dehydrogenase 7 (CKX7) from Arabidopsis thaliana (Mouse-ear cress).